The chain runs to 93 residues: Early nodulin-12A (93 aa).

The N-terminal stretch at 1-24 (MASFLLSILVFFLSALVLVPQGFA) is a signal peptide. Residues 30–93 (PAYRPPQTEP…HPPSEDNIHF (64 aa)) form a disordered region. 10 repeat units span residues 34 to 38 (PPQTE), 39 to 43 (PPVHK), 44 to 48 (PPHKE), 49 to 53 (PPVHK), 54 to 58 (PPHKD), 59 to 63 (PPVNK), 64 to 68 (PPQKE), 69 to 73 (PPVHK), 74 to 78 (PPRKE), and 79 to 83 (PPTHR). The 10 X 5 AA tandem repeats of P-P-[HQVRT]-[HKNT]-[DEKR] stretch occupies residues 34-83 (PPQTEPPVHKPPHKEPPVHKPPHKDPPVNKPPQKEPPVHKPPRKEPPTHR). Residues 46–93 (HKEPPVHKPPHKDPPVNKPPQKEPPVHKPPRKEPPTHRHPPSEDNIHF) are compositionally biased toward basic and acidic residues.

It belongs to the plant proline-rich protein superfamily. ENOD12 family. More abundant in the young nodules than the mature nodules.

Its subcellular location is the secreted. The protein resides in the cell wall. Involved in the infection process during the plant-rhizobium interaction. The sequence is that of Early nodulin-12A (ENOD12A) from Medicago sativa (Alfalfa).